Reading from the N-terminus, the 572-residue chain is Proline--tRNA ligase (572 aa).

It belongs to the class-II aminoacyl-tRNA synthetase family. ProS type 1 subfamily. Homodimer.

Its subcellular location is the cytoplasm. It carries out the reaction tRNA(Pro) + L-proline + ATP = L-prolyl-tRNA(Pro) + AMP + diphosphate. In terms of biological role, catalyzes the attachment of proline to tRNA(Pro) in a two-step reaction: proline is first activated by ATP to form Pro-AMP and then transferred to the acceptor end of tRNA(Pro). As ProRS can inadvertently accommodate and process non-cognate amino acids such as alanine and cysteine, to avoid such errors it has two additional distinct editing activities against alanine. One activity is designated as 'pretransfer' editing and involves the tRNA(Pro)-independent hydrolysis of activated Ala-AMP. The other activity is designated 'posttransfer' editing and involves deacylation of mischarged Ala-tRNA(Pro). The misacylated Cys-tRNA(Pro) is not edited by ProRS. In Escherichia coli O17:K52:H18 (strain UMN026 / ExPEC), this protein is Proline--tRNA ligase.